The chain runs to 105 residues: Probable tetrachloroethene reductive dehalogenase membrane anchor protein (105 aa).

Helical transmembrane passes span 3-23, 35-55, and 66-86; these read IYDVLIWMALGMTALLIQYGI, IPLQICGFLANFFFIFALAWG, and AIGMGFIFFGGTALIPAIITY.

This sequence belongs to the PceB family.

Its subcellular location is the cell membrane. Functionally, may act as a membrane anchor for the tetrachloroethene reductive dehalogenase PceA. The polypeptide is Probable tetrachloroethene reductive dehalogenase membrane anchor protein (Desulfitobacterium hafniense (Desulfitobacterium frappieri)).